A 596-amino-acid chain; its full sequence is Protein kinase C iota type (596 aa).

Over residues 1–12 (MPTQRDSSTMSH) the composition is skewed to polar residues. Residues 1–21 (MPTQRDSSTMSHTVACGGGGD) form a disordered region. Proline 2 is subject to N-acetylproline. Residues 2–28 (PTQRDSSTMSHTVACGGGGDHSHQVRV) are required for interaction with RAB2. A regulatory domain region spans residues 2-253 (PTQRDSSTMS…KASSSLGLQD (252 aa)). At threonine 3 the chain carries Phosphothreonine. Phosphoserine is present on residues serine 7 and serine 8. Threonine 9 bears the Phosphothreonine mark. The PB1 domain occupies 25-108 (QVRVKAYYRG…SELLIHVFPC (84 aa)). The interval 72-91 (DEEGDPCTVSSQLELEEAFR) is interaction with PARD6A. The Pseudosubstrate signature appears at 125–134 (YRRGARRWRK). The Phorbol-ester/DAG-type zinc-finger motif lies at 140 to 190 (GHTFQAKRFNRRAHCAICTDRIWGLGRQGYKCINCKLLVHKKCHKLVTIEC). One can recognise a Protein kinase domain in the interval 254–522 (FDLLRVIGRG…FADIQGHPFF (269 aa)). 260 to 268 (IGRGSYAKV) provides a ligand contact to ATP. Phosphotyrosine; by SRC occurs at positions 265 and 280. ATP is bound at residue lysine 283. The residue at position 334 (tyrosine 334) is a Phosphotyrosine; by SRC. Aspartate 378 (proton acceptor) is an active-site residue. Threonine 412 is subject to Phosphothreonine; by PDPK1. One can recognise an AGC-kinase C-terminal domain in the interval 523-594 (RNVDWDMMEQ…INPLLMSAEE (72 aa)). Threonine 564 bears the Phosphothreonine mark.

It belongs to the protein kinase superfamily. AGC Ser/Thr protein kinase family. PKC subfamily. In terms of assembly, forms a complex with SQSTM1 and MP2K5. Interacts directly with SQSTM1. Interacts with IKBKB. Interacts with PARD6A, PARD6B and PARD6G. Part of a quaternary complex containing aPKC, PARD3, a PARD6 protein (PARD6A, PARD6B or PARD6G) and a GTPase protein (CDC42 or RAC1). Part of a complex with LLGL1 and PARD6B. Interacts with ADAP1/CENTA1. Interaction with SMG1, through the ZN-finger domain, activates the kinase activity. Interacts with CDK7. Forms a complex with RAB2A and GAPDH involved in recruitment onto the membrane of vesicular tubular clusters (VTCs). Interacts with ECT2 ('Thr-359' phosphorylated form). Interacts with VAMP2. Interacts with WDFY2 (via WD repeats 1-3). Post-translationally, phosphorylation at Thr-412 in the activation loop is not mandatory for activation. Upon neuronal growth factor (NGF) stimulation, phosphorylated by SRC at Tyr-265, Tyr-280 and Tyr-334. Phosphorylation at Tyr-265 facilitates binding to KPNB1/importin-beta regulating entry of PRKCI into the nucleus. Phosphorylation on Tyr-334 is important for NF-kappa-B stimulation. Phosphorylated at Thr-564 during the initial phase of long term potentiation. As to expression, expressed in dorsal hippocampus (at protein level).

It localises to the cytoplasm. The protein resides in the membrane. The protein localises to the endosome. It is found in the nucleus. It catalyses the reaction L-seryl-[protein] + ATP = O-phospho-L-seryl-[protein] + ADP + H(+). The enzyme catalyses L-threonyl-[protein] + ATP = O-phospho-L-threonyl-[protein] + ADP + H(+). Its activity is regulated as follows. Atypical PKCs (PRKCI and PRKCZ) exhibit an elevated basal enzymatic activity (that may be due to the interaction with SMG1 or SQSTM1) and are not regulated by diacylglycerol, phosphatidylserine, phorbol esters or calcium ions. Two specific sites, Thr-412 (activation loop of the kinase domain) and Thr-564 (turn motif), need to be phosphorylated for its full activation. Might also be a target for novel lipid activators that are elevated during nutrient-stimulated insulin secretion. Calcium- and diacylglycerol-independent serine/ threonine-protein kinase that plays a general protective role against apoptotic stimuli, is involved in NF-kappa-B activation, cell survival, differentiation and polarity, and contributes to the regulation of microtubule dynamics in the early secretory pathway. Is necessary for BCR-ABL oncogene-mediated resistance to apoptotic drug in leukemia cells, protecting leukemia cells against drug-induced apoptosis. In cultured neurons, prevents amyloid beta protein-induced apoptosis by interrupting cell death process at a very early step. In glioblastoma cells, may function downstream of phosphatidylinositol 3-kinase (PI3K) and PDPK1 in the promotion of cell survival by phosphorylating and inhibiting the pro-apoptotic factor BAD. Can form a protein complex in non-small cell lung cancer (NSCLC) cells with PARD6A and ECT2 and regulate ECT2 oncogenic activity by phosphorylation, which in turn promotes transformed growth and invasion. In response to nerve growth factor (NGF), acts downstream of SRC to phosphorylate and activate IRAK1, allowing the subsequent activation of NF-kappa-B and neuronal cell survival. Functions in the organization of the apical domain in epithelial cells by phosphorylating EZR. This step is crucial for activation and normal distribution of EZR at the early stages of intestinal epithelial cell differentiation. Forms a protein complex with LLGL1 and PARD6B independently of PARD3 to regulate epithelial cell polarity. Plays a role in microtubule dynamics in the early secretory pathway through interaction with RAB2A and GAPDH and recruitment to vesicular tubular clusters (VTCs). In human coronary artery endothelial cells (HCAEC), is activated by saturated fatty acids and mediates lipid-induced apoptosis. Downstream of PI3K is required for insulin-stimulated glucose transport. Activates RAB4A and promotes its association with KIF3A which is required for the insulin-induced SLC2A4/GLUT4 translocation in adipocytes. Is essential in early embryogenesis and development of differentiating photoreceptors by playing a role in the establishment of epithelial and neuronal polarity. Involved in early synaptic long term potentiation phase in CA1 hippocampal cells and short term memory formation. This Rattus norvegicus (Rat) protein is Protein kinase C iota type (Prkci).